Here is a 207-residue protein sequence, read N- to C-terminus: Tetrathionate reductase subunit B (207 aa).

The N-terminal stretch at 1–28 (MLISKTLIFYQVVNIVSQKGSGKRRWKM) is a signal peptide. 3 4Fe-4S ferredoxin-type domains span residues 34–63 (YVYV…PVGY), 75–106 (GRVA…KTEE), and 107–136 (GLVL…RNPV). [4Fe-4S] cluster contacts are provided by Cys-43, Cys-46, Cys-49, Cys-53, Cys-84, Cys-87, Cys-92, Cys-96, Cys-116, Cys-119, Cys-122, Cys-126, Cys-143, Cys-146, Cys-157, and Cys-161.

As to quaternary structure, probably composed of three subunits: TtrA, TtrB and TtrC.

The protein resides in the cell membrane. Functionally, part of a membrane-bound tetrathionate reductase that catalyzes the reduction of tetrathionate to thiosulfate. TtrB is probably involved in transfer of electrons from TtrC to TtrA. This Archaeoglobus fulgidus (strain ATCC 49558 / DSM 4304 / JCM 9628 / NBRC 100126 / VC-16) protein is Tetrathionate reductase subunit B (ttrB).